A 510-amino-acid chain; its full sequence is ATP synthase subunit alpha (510 aa).

Position 169-176 (169-176) interacts with ATP; sequence GDRQTGKT.

Belongs to the ATPase alpha/beta chains family. As to quaternary structure, F-type ATPases have 2 components, CF(1) - the catalytic core - and CF(0) - the membrane proton channel. CF(1) has five subunits: alpha(3), beta(3), gamma(1), delta(1), epsilon(1). CF(0) has three main subunits: a(1), b(2) and c(9-12). The alpha and beta chains form an alternating ring which encloses part of the gamma chain. CF(1) is attached to CF(0) by a central stalk formed by the gamma and epsilon chains, while a peripheral stalk is formed by the delta and b chains.

Its subcellular location is the cell inner membrane. It carries out the reaction ATP + H2O + 4 H(+)(in) = ADP + phosphate + 5 H(+)(out). Functionally, produces ATP from ADP in the presence of a proton gradient across the membrane. The alpha chain is a regulatory subunit. This chain is ATP synthase subunit alpha, found in Anaeromyxobacter sp. (strain K).